Reading from the N-terminus, the 165-residue chain is uncharacterized protein (165 aa).

The helical transmembrane segment at 16–36 threads the bilayer; the sequence is ASISSILNFFFFYIMEYFVAV.

This sequence belongs to the asfivirus F165R family.

It is found in the host membrane. This is an uncharacterized protein from African swine fever virus (isolate Tick/Malawi/Lil 20-1/1983) (ASFV).